The following is an 892-amino-acid chain: Polyribonucleotide nucleotidyltransferase (892 aa).

The tract at residues 407–427 (YMHNYEMPPYSTGETGRVGSP) is disordered. Mg(2+)-binding residues include aspartate 521 and aspartate 527. A KH domain is found at 587 to 646 (PRIITTTVPVDKIGEVIGPKGKMINQIQEDTGAEIAIEDDGTVYISSEGGEAAEKAKEII). The 73-residue stretch at 658-730 (GETYNGKVVK…DRGKISLAIP (73 aa)) folds into the S1 motif domain. The interval 727-892 (LAIPGFEDQE…VRRDFDPFED (166 aa)) is disordered. 2 stretches are compositionally biased toward basic and acidic residues: residues 739-844 (APRR…DRRS) and 851-877 (RRDDRNPRYAADENYDEYRADREERSE).

This sequence belongs to the polyribonucleotide nucleotidyltransferase family. Mg(2+) serves as cofactor.

It is found in the cytoplasm. The enzyme catalyses RNA(n+1) + phosphate = RNA(n) + a ribonucleoside 5'-diphosphate. In terms of biological role, involved in mRNA degradation. Catalyzes the phosphorolysis of single-stranded polyribonucleotides processively in the 3'- to 5'-direction. This Bifidobacterium adolescentis (strain ATCC 15703 / DSM 20083 / NCTC 11814 / E194a) protein is Polyribonucleotide nucleotidyltransferase.